The sequence spans 434 residues: 3-phosphoshikimate 1-carboxyvinyltransferase (434 aa).

The 3-phosphoshikimate site is built by K22, S23, and R27. Phosphoenolpyruvate is bound at residue K22. G93 and R121 together coordinate phosphoenolpyruvate. 6 residues coordinate 3-phosphoshikimate: S168, S169, Q170, S199, D320, and K347. Q170 provides a ligand contact to phosphoenolpyruvate. Residue D320 is the Proton acceptor of the active site. Phosphoenolpyruvate is bound by residues R351, R394, and K419.

Belongs to the EPSP synthase family. In terms of assembly, monomer.

It is found in the cytoplasm. The enzyme catalyses 3-phosphoshikimate + phosphoenolpyruvate = 5-O-(1-carboxyvinyl)-3-phosphoshikimate + phosphate. The protein operates within metabolic intermediate biosynthesis; chorismate biosynthesis; chorismate from D-erythrose 4-phosphate and phosphoenolpyruvate: step 6/7. Catalyzes the transfer of the enolpyruvyl moiety of phosphoenolpyruvate (PEP) to the 5-hydroxyl of shikimate-3-phosphate (S3P) to produce enolpyruvyl shikimate-3-phosphate and inorganic phosphate. The sequence is that of 3-phosphoshikimate 1-carboxyvinyltransferase from Burkholderia multivorans (strain ATCC 17616 / 249).